Consider the following 212-residue polypeptide: Large ribosomal subunit protein uL3 (212 aa).

The disordered stretch occupies residues 130 to 158 (KRGSMTHGSKNHRLPGSTGAGTTPGRVYP).

This sequence belongs to the universal ribosomal protein uL3 family. In terms of assembly, part of the 50S ribosomal subunit. Forms a cluster with proteins L14 and L19.

One of the primary rRNA binding proteins, it binds directly near the 3'-end of the 23S rRNA, where it nucleates assembly of the 50S subunit. The chain is Large ribosomal subunit protein uL3 from Gloeothece citriformis (strain PCC 7424) (Cyanothece sp. (strain PCC 7424)).